A 222-amino-acid chain; its full sequence is Iron-sulfur cluster repair protein YtfE (222 aa).

It belongs to the RIC family. YtfE subfamily. Homodimer.

Its subcellular location is the cytoplasm. Its function is as follows. Di-iron-containing protein involved in the repair of iron-sulfur clusters damaged by oxidative and nitrosative stress conditions. This is Iron-sulfur cluster repair protein YtfE from Musicola paradisiaca (strain Ech703) (Dickeya paradisiaca).